The chain runs to 58 residues: uncharacterized protein (58 aa).

This is an uncharacterized protein from Dictyostelium discoideum (Social amoeba).